The sequence spans 257 residues: uncharacterized protein (257 aa).

The helical transmembrane segment at 6 to 26 (IFWLNLAAIIIISIVVSGGMF) threads the bilayer.

Belongs to the staphylococcal tandem lipoprotein family.

The protein localises to the cell membrane. This is an uncharacterized protein from Staphylococcus aureus (strain Mu50 / ATCC 700699).